The following is a 251-amino-acid chain: Ubiquinone/menaquinone biosynthesis C-methyltransferase UbiE (251 aa).

Residues threonine 74, aspartate 95, 123-124 (NA), and serine 140 each bind S-adenosyl-L-methionine.

This sequence belongs to the class I-like SAM-binding methyltransferase superfamily. MenG/UbiE family.

The enzyme catalyses a 2-demethylmenaquinol + S-adenosyl-L-methionine = a menaquinol + S-adenosyl-L-homocysteine + H(+). It carries out the reaction a 2-methoxy-6-(all-trans-polyprenyl)benzene-1,4-diol + S-adenosyl-L-methionine = a 5-methoxy-2-methyl-3-(all-trans-polyprenyl)benzene-1,4-diol + S-adenosyl-L-homocysteine + H(+). It functions in the pathway quinol/quinone metabolism; menaquinone biosynthesis; menaquinol from 1,4-dihydroxy-2-naphthoate: step 2/2. The protein operates within cofactor biosynthesis; ubiquinone biosynthesis. Functionally, methyltransferase required for the conversion of demethylmenaquinol (DMKH2) to menaquinol (MKH2) and the conversion of 2-polyprenyl-6-methoxy-1,4-benzoquinol (DDMQH2) to 2-polyprenyl-3-methyl-6-methoxy-1,4-benzoquinol (DMQH2). This Escherichia coli O9:H4 (strain HS) protein is Ubiquinone/menaquinone biosynthesis C-methyltransferase UbiE.